The following is a 315-amino-acid chain: Calumenin-B (315 aa).

The first 19 residues, 1–19 (MEQWPLLFVVALCILQSSS), serve as a signal peptide directing secretion. The span at 22 to 39 (MEKKDRVHHDAPLSNKDH) shows a compositional bias: basic and acidic residues. The segment at 22–42 (MEKKDRVHHDAPLSNKDHDDE) is disordered. EF-hand domains lie at 68–103 (ESKERLGKIVEKIDEDHDGFVTADEMKRWIKHAQRR), 104–139 (WIYEDVDRQWQAHDLNSDSFVSWEEYKDATYGYILD), 151–186 (QMMTRDERRFKMADQDGDLRANKEEFTAFLHPEEFD), 188–223 (MKDIVVLETMEDIDKNGDGLIDLNEYIGDMYSQNGD), 229–264 (WVKTEREQFTEFRDKNKDGRMDKDETRDWILPADYD), and 265–300 (HAEAEAKHLLYESDADKDGRLTKQEIVDKYDLFVGS). Ca(2+)-binding residues include D81, D83, D85, E92, D117, N119, D121, E128, D164, D166, D168, R170, E175, D201, N203, D205, E212, D242, N244, D246, R248, E253, D278, D280, D282, R284, and E289. The short motif at 312–315 (HDEF) is the Prevents secretion from ER element.

The protein belongs to the CREC family. Interacts with ggcx.

Its subcellular location is the endoplasmic reticulum membrane. It is found in the golgi apparatus. It localises to the secreted. The protein localises to the melanosome. The protein resides in the sarcoplasmic reticulum lumen. Its function is as follows. Involved in regulation of vitamin K-dependent carboxylation of multiple N-terminal glutamate residues. Seems to inhibit gamma-carboxylase ggcx. Binds 7 calcium ions with a low affinity. The polypeptide is Calumenin-B (calub) (Danio rerio (Zebrafish)).